The chain runs to 421 residues: Histidine--tRNA ligase (421 aa).

Belongs to the class-II aminoacyl-tRNA synthetase family. Homodimer.

The protein resides in the cytoplasm. It carries out the reaction tRNA(His) + L-histidine + ATP = L-histidyl-tRNA(His) + AMP + diphosphate + H(+). This chain is Histidine--tRNA ligase, found in Natranaerobius thermophilus (strain ATCC BAA-1301 / DSM 18059 / JW/NM-WN-LF).